A 379-amino-acid polypeptide reads, in one-letter code: 3-dehydroquinate synthase (379 aa).

NAD(+) is bound by residues 67–72 (PGEKNK), 101–105 (GIVLD), 125–126 (TT), Lys-138, and Lys-147. Zn(2+) contacts are provided by Glu-180, His-242, and His-258.

It belongs to the sugar phosphate cyclases superfamily. Dehydroquinate synthase family. The cofactor is NAD(+). It depends on Co(2+) as a cofactor. Requires Zn(2+) as cofactor.

Its subcellular location is the cytoplasm. The enzyme catalyses 7-phospho-2-dehydro-3-deoxy-D-arabino-heptonate = 3-dehydroquinate + phosphate. It functions in the pathway metabolic intermediate biosynthesis; chorismate biosynthesis; chorismate from D-erythrose 4-phosphate and phosphoenolpyruvate: step 2/7. Functionally, catalyzes the conversion of 3-deoxy-D-arabino-heptulosonate 7-phosphate (DAHP) to dehydroquinate (DHQ). In Chlamydia felis (strain Fe/C-56) (Chlamydophila felis), this protein is 3-dehydroquinate synthase.